We begin with the raw amino-acid sequence, 498 residues long: Lysine--tRNA ligase (498 aa).

2 residues coordinate Mg(2+): glutamate 411 and glutamate 418.

It belongs to the class-II aminoacyl-tRNA synthetase family. Homodimer. Mg(2+) serves as cofactor.

The protein localises to the cytoplasm. It carries out the reaction tRNA(Lys) + L-lysine + ATP = L-lysyl-tRNA(Lys) + AMP + diphosphate. The polypeptide is Lysine--tRNA ligase (Enterococcus faecalis (strain ATCC 700802 / V583)).